A 451-amino-acid polypeptide reads, in one-letter code: Serine--tRNA ligase (451 aa).

247-249 (TAE) contributes to the L-serine binding site. ATP-binding positions include 278–280 (RKE) and V294. An L-serine-binding site is contributed by E301. 365 to 368 (ELAS) contacts ATP. T400 contacts L-serine.

The protein belongs to the class-II aminoacyl-tRNA synthetase family. Type-1 seryl-tRNA synthetase subfamily. Homodimer. The tRNA molecule binds across the dimer.

It is found in the cytoplasm. It carries out the reaction tRNA(Ser) + L-serine + ATP = L-seryl-tRNA(Ser) + AMP + diphosphate + H(+). The catalysed reaction is tRNA(Sec) + L-serine + ATP = L-seryl-tRNA(Sec) + AMP + diphosphate + H(+). It participates in aminoacyl-tRNA biosynthesis; selenocysteinyl-tRNA(Sec) biosynthesis; L-seryl-tRNA(Sec) from L-serine and tRNA(Sec): step 1/1. Its function is as follows. Catalyzes the attachment of serine to tRNA(Ser). Is also able to aminoacylate tRNA(Sec) with serine, to form the misacylated tRNA L-seryl-tRNA(Sec), which will be further converted into selenocysteinyl-tRNA(Sec). This Pyrobaculum aerophilum (strain ATCC 51768 / DSM 7523 / JCM 9630 / CIP 104966 / NBRC 100827 / IM2) protein is Serine--tRNA ligase.